The following is a 347-amino-acid chain: UDP-N-acetylenolpyruvoylglucosamine reductase (347 aa).

The 172-residue stretch at 24 to 195 (FDARARVAAR…VAVTFRLPKA (172 aa)) folds into the FAD-binding PCMH-type domain. The active site involves Arg-171. Catalysis depends on Ser-247, which acts as the Proton donor. The active site involves Glu-343.

The protein belongs to the MurB family. Requires FAD as cofactor.

It localises to the cytoplasm. It catalyses the reaction UDP-N-acetyl-alpha-D-muramate + NADP(+) = UDP-N-acetyl-3-O-(1-carboxyvinyl)-alpha-D-glucosamine + NADPH + H(+). It functions in the pathway cell wall biogenesis; peptidoglycan biosynthesis. Its function is as follows. Cell wall formation. The sequence is that of UDP-N-acetylenolpyruvoylglucosamine reductase from Burkholderia pseudomallei (strain 668).